The primary structure comprises 301 residues: D-alanine--D-alanine ligase (301 aa).

The 196-residue stretch at 99–294 folds into the ATP-grasp domain; the sequence is KSVLEANGIR…FSELIDMIIQ (196 aa). 126–181 contacts ATP; sequence INELGYPVVVKPTHGGSSVATFIVKEEKEIENCVSEAFKWDSEVMIEKFIKGDEIT. Mg(2+)-binding residues include Asp-248, Glu-261, and Asn-263.

The protein belongs to the D-alanine--D-alanine ligase family. Mg(2+) serves as cofactor. Requires Mn(2+) as cofactor.

Its subcellular location is the cytoplasm. It carries out the reaction 2 D-alanine + ATP = D-alanyl-D-alanine + ADP + phosphate + H(+). The protein operates within cell wall biogenesis; peptidoglycan biosynthesis. In terms of biological role, cell wall formation. This Clostridium beijerinckii (strain ATCC 51743 / NCIMB 8052) (Clostridium acetobutylicum) protein is D-alanine--D-alanine ligase.